Here is a 475-residue protein sequence, read N- to C-terminus: MADLQKQENSSRFTNVSVIAPESQGQHEQQKQQEQLEQQKQPTGLLKGLNGFPSAPQPLFMEDPPSTVSGELNDNPAWFNNPRKRAIPNSIIKRSNGQSLSPVRSDSADVPAFSNSNGFNNVTFGSKKDPRILKNVSPNDNNSANNNAHSSDLGTVVFDSNEAPPKTSLADWQKEDGIFSSKTDNIEDPNLSSNITFDGKPTATPSPFRPLEKTSRILNFFDKNTKTTPNTASSEASAGSKEGASTNWDDHAIIIFGYPETIANSIILHFANFGEILEDFRVIKDFKKLNSKNMSKSPSLTAQKYPIYTGDGWVKLTYKSELSKSRALQENGIIMNGTLIGCVSYSPAALKQLASLKKSEEIINNKTSSQTSLSSKDLSNYRKTEGIFEKAKAKAVTSKVRNAEFKVSKNSTSFKNPRRLEIKDGRSLFLRNRGKIHSGVLSSIESDLKKREQASKSKKSWLNRLNNWLFGWNDL.

Disordered regions lie at residues 1-83 and 89-108; these read MADL…NNPR and NSII…SDSA. N-acetylalanine is present on A2. Residues 7 to 17 show a composition bias toward polar residues; it reads QENSSRFTNVS. Over residues 22 to 41 the composition is skewed to low complexity; the sequence is ESQGQHEQQKQQEQLEQQKQ. Positions 92–104 are enriched in polar residues; the sequence is IKRSNGQSLSPVR. S101 carries the post-translational modification Phosphoserine. The FG 1 repeat unit spans residues 124–125; it reads FG. Disordered regions lie at residues 190 to 209 and 222 to 244; these read NLSS…SPFR and DKNT…KEGA. Residues 232-244 are compositionally biased toward low complexity; the sequence is ASSEASAGSKEGA. In terms of domain architecture, RRM Nup35-type spans 247–352; sequence NWDDHAIIIF…VSYSPAALKQ (106 aa). 2 FG repeats span residues 264–265 and 273–274; these read NS and FG. Phosphoserine is present on residues S297 and S438. Residues 405 to 438 are PSE1 binding; the sequence is FKVSKNSTSFKNPRRLEIKDGRSLFLRNRGKIHS. Positions 449–475 are required for nuclear membrane association and proliferation; sequence KKREQASKSKKSWLNRLNNWLFGWNDL. One copy of the FG 4 repeat lies at 470-471; the sequence is FG.

Component of the nuclear pore complex (NPC). NPC constitutes the exclusive means of nucleocytoplasmic transport. NPCs allow the passive diffusion of ions and small molecules and the active, nuclear transport receptor-mediated bidirectional transport of macromolecules such as proteins, RNAs, ribonucleoparticles (RNPs), and ribosomal subunits across the nuclear envelope. Due to its 8-fold rotational symmetry, all subunits are present with 8 copies or multiples thereof. NUP53 interacts with MAD1-MAD2. During mitosis NUP53 changes its binding partner within the NPC from NUP170 to NIC96, exposing a high affinity binding site for the karyopherin PSE1, and retaining it in the NPC, while MAD2 is released. It forms a subcomplex with ASM4 and NDC1. Phosphorylated by CDC28.

It localises to the nucleus. It is found in the nuclear pore complex. The protein resides in the nucleus membrane. Functions as a component of the nuclear pore complex (NPC). NPC components, collectively referred to as nucleoporins (NUPs), can play the role of both NPC structural components and of docking or interaction partners for transiently associated nuclear transport factors. Active directional transport is assured by both, a Phe-Gly (FG) repeat affinity gradient for these transport factors across the NPC and a transport cofactor concentration gradient across the nuclear envelope (GSP1 and GSP2 GTPases associated predominantly with GTP in the nucleus, with GDP in the cytoplasm). NUP53 may play an important role in cell cycle regulation by inhibiting PSE1 transport functions during mitosis and sequestration of MAD1-MAD2 in a cell cycle-dependent manner. It also seems to play an important role in de novo NPC assembly by associating with nuclear membranes and driving their proliferation. This chain is Nucleoporin NUP53 (NUP53), found in Saccharomyces cerevisiae (strain ATCC 204508 / S288c) (Baker's yeast).